The primary structure comprises 204 residues: Small heat shock protein, chloroplastic (204 aa).

The disordered stretch occupies residues 34-55 (QMGRVDHDHELDDRSNRAPISR). Basic and acidic residues predominate over residues 37 to 49 (RVDHDHELDDRSN). One can recognise a sHSP domain in the interval 98 to 204 (GSGRAMRRGW…KKDVFQVMVD (107 aa)).

Belongs to the small heat shock protein (HSP20) family.

The protein resides in the plastid. The protein localises to the chloroplast stroma. The sequence is that of Small heat shock protein, chloroplastic (HSP23) from Oxybasis rubra (Red goosefoot).